The chain runs to 172 residues: Adenine phosphoribosyltransferase (172 aa).

Belongs to the purine/pyrimidine phosphoribosyltransferase family. In terms of assembly, homodimer.

Its subcellular location is the cytoplasm. The catalysed reaction is AMP + diphosphate = 5-phospho-alpha-D-ribose 1-diphosphate + adenine. It participates in purine metabolism; AMP biosynthesis via salvage pathway; AMP from adenine: step 1/1. Functionally, catalyzes a salvage reaction resulting in the formation of AMP, that is energically less costly than de novo synthesis. This is Adenine phosphoribosyltransferase from Streptococcus uberis (strain ATCC BAA-854 / 0140J).